Reading from the N-terminus, the 169-residue chain is Crossover junction endodeoxyribonuclease RuvC (169 aa).

Catalysis depends on residues Asp13, Glu73, and Asp145. Mg(2+) is bound by residues Asp13, Glu73, and Asp145.

Belongs to the RuvC family. In terms of assembly, homodimer which binds Holliday junction (HJ) DNA. The HJ becomes 2-fold symmetrical on binding to RuvC with unstacked arms; it has a different conformation from HJ DNA in complex with RuvA. In the full resolvosome a probable DNA-RuvA(4)-RuvB(12)-RuvC(2) complex forms which resolves the HJ. Requires Mg(2+) as cofactor.

The protein resides in the cytoplasm. It catalyses the reaction Endonucleolytic cleavage at a junction such as a reciprocal single-stranded crossover between two homologous DNA duplexes (Holliday junction).. Functionally, the RuvA-RuvB-RuvC complex processes Holliday junction (HJ) DNA during genetic recombination and DNA repair. Endonuclease that resolves HJ intermediates. Cleaves cruciform DNA by making single-stranded nicks across the HJ at symmetrical positions within the homologous arms, yielding a 5'-phosphate and a 3'-hydroxyl group; requires a central core of homology in the junction. The consensus cleavage sequence is 5'-(A/T)TT(C/G)-3'. Cleavage occurs on the 3'-side of the TT dinucleotide at the point of strand exchange. HJ branch migration catalyzed by RuvA-RuvB allows RuvC to scan DNA until it finds its consensus sequence, where it cleaves and resolves the cruciform DNA. This chain is Crossover junction endodeoxyribonuclease RuvC, found in Solidesulfovibrio magneticus (strain ATCC 700980 / DSM 13731 / RS-1) (Desulfovibrio magneticus).